A 2349-amino-acid polypeptide reads, in one-letter code: Reducing polyketide synthase AFT16-1 (2349 aa).

The span at 1–14 shows a compositional bias: basic and acidic residues; it reads MNGKSRDNGHDGKR. Disordered regions lie at residues 1–21 and 37–80; these read MNGKSRDNGHDGKRQPVVPAE and TNPS…TSNS. Residues 20–462 enclose the Ketosynthase family 3 (KS3) domain; sequence AEPIAIVGTA…GTNAHTILES (443 aa). Residues Cys-194, His-333, and His-382 each act as for beta-ketoacyl synthase activity in the active site. Positions 578–888 are malonyl-CoA:ACP transacylase (MAT) domain; that stretch reads VFTGQGAQWP…LLYKGVLERF (311 aa). Residues 958–1092 are N-terminal hotdog fold; sequence HPLLGFRSVD…GDILLSHFAK (135 aa). The tract at residues 958–1263 is dehydratase (DH) domain; the sequence is HPLLGFRSVD…QVEGLKFSCM (306 aa). The PKS/mFAS DH domain occupies 958–1269; that stretch reads HPLLGFRSVD…FSCMYPAQET (312 aa). The active-site Proton acceptor; for dehydratase activity is His-990. The interval 1111 to 1269 is C-terminal hotdog fold; the sequence is MSSVEPSLFY…FSCMYPAQET (159 aa). Asp-1170 acts as the Proton donor; for dehydratase activity in catalysis. The interval 1976-2164 is ketoreductase (KR) domain; that stretch reads SPNKTYLLVG…VVGVGYVARA (189 aa). Positions 2273-2347 constitute a Carrier domain; it reads EILSGSLKQK…GLCLEAIGQW (75 aa). Position 2307 is an O-(pantetheine 4'-phosphoryl)serine (Ser-2307).

It functions in the pathway mycotoxin biosynthesis. Functionally, reducing polyketide synthase; part of the gene clusters that mediate the biosynthesis of the host-selective toxins (HSTs) AF-toxins responsible for Alternaria black spot of strawberry disease by the strawberry pathotype. AF-toxin I and III are valine derivatives of 2,3-dyhydroxy-isovaleric acid and 2-hydroxy-isovaleric acid respectively, while AF II is an isoleucine derivative of 2-hydroxy-valeric acid. These derivatives are bound to a 9,10-epoxy-8-hydroxy-9-methyl-decatrienoic acid (EDA) moiety. On cellular level, AF-toxins affect plasma membrane of susceptible cells and cause a sudden increase in loss of K(+) after a few minutes of toxin treatment. The aldo-keto reductase AFTS1 catalyzes the conversion of 2-keto-isovaleric acid (2-KIV) to 2-hydroxy-isovaleric acid (2-HIV) by reduction of its ketone to an alcohol. The acyl-CoA ligase AFT1, the hydrolase AFT2 and the enoyl-CoA hydratases AFT3 and AFT6, but also the polyketide synthase AFT9, the acyl-CoA dehydrogenase AFT10, the cytochrome P450 monooxygenase AFT11 and the oxidoreductase AFT12 are all involved in the biosynthesis of the AK-, AF- and ACT-toxin common EDA structural moiety. The exact function of each enzyme, and of additional enzymes identified within the AF-toxin clusters have still to be determined. This Alternaria alternata (Alternaria rot fungus) protein is Reducing polyketide synthase AFT16-1.